A 243-amino-acid polypeptide reads, in one-letter code: MASLRSAHPADRIIVALDGMAPEQALAFAAQVEGLRWVKVGLELFVQAGPEVVAQLREQGLRVFLDLKFHDIPATMAGACRRAAALGAELITVHACAGSEALKAAQAAAVEGAQGAGQPAPTLLAVTVLTSWEEQRLQRELAITQGIAERVPALAQLSATAGIGGCVCSPLEAAALRAQHPEPFALVTPGIRPKGAAVGDQARVMGPAEAIAAGASQLVIGRPITKAEDPSAAFAACCGELLG.

Substrate contacts are provided by residues Asp18, Lys39, 66-75, Thr130, Arg192, Gln201, Gly221, and Arg222; that span reads DLKFHDIPAT. Lys68 (proton donor) is an active-site residue.

Belongs to the OMP decarboxylase family. Type 1 subfamily. As to quaternary structure, homodimer.

The catalysed reaction is orotidine 5'-phosphate + H(+) = UMP + CO2. It participates in pyrimidine metabolism; UMP biosynthesis via de novo pathway; UMP from orotate: step 2/2. Catalyzes the decarboxylation of orotidine 5'-monophosphate (OMP) to uridine 5'-monophosphate (UMP). The chain is Orotidine 5'-phosphate decarboxylase from Synechococcus sp. (strain WH7803).